A 455-amino-acid chain; its full sequence is Ribulose bisphosphate carboxylase large chain (455 aa).

K5 bears the N6,N6,N6-trimethyllysine mark. Substrate-binding residues include N114 and T164. The active-site Proton acceptor is K166. Residue K168 participates in substrate binding. Positions 192, 194, and 195 each coordinate Mg(2+). At K192 the chain carries N6-carboxylysine. Residue H285 is the Proton acceptor of the active site. The substrate site is built by R286, H318, and S370.

It belongs to the RuBisCO large chain family. Type I subfamily. Heterohexadecamer of 8 large chains and 8 small chains; disulfide-linked. The disulfide link is formed within the large subunit homodimers. Mg(2+) serves as cofactor. Post-translationally, the disulfide bond which can form in the large chain dimeric partners within the hexadecamer appears to be associated with oxidative stress and protein turnover.

The protein localises to the plastid. It is found in the chloroplast. It carries out the reaction 2 (2R)-3-phosphoglycerate + 2 H(+) = D-ribulose 1,5-bisphosphate + CO2 + H2O. It catalyses the reaction D-ribulose 1,5-bisphosphate + O2 = 2-phosphoglycolate + (2R)-3-phosphoglycerate + 2 H(+). In terms of biological role, ruBisCO catalyzes two reactions: the carboxylation of D-ribulose 1,5-bisphosphate, the primary event in carbon dioxide fixation, as well as the oxidative fragmentation of the pentose substrate in the photorespiration process. Both reactions occur simultaneously and in competition at the same active site. The polypeptide is Ribulose bisphosphate carboxylase large chain (Lupinus paraguariensis (Lupine)).